The sequence spans 224 residues: Germin-like protein 1-2 (224 aa).

The N-terminal stretch at 1 to 29 is a signal peptide; sequence MASSRSVVLRVLVAVAVVAAAGAPRLAVA. Cysteines 38 and 53 form a disulfide. The region spanning 67–215 is the Cupin type-1 domain; that stretch reads DAIVQAPSTS…TFLMGEDEVG (149 aa). An N-linked (GlcNAc...) asparagine glycan is attached at N82. Positions 115, 117, 122, and 161 each coordinate Mn(2+). A glycan (N-linked (GlcNAc...) asparagine) is linked at N170.

This sequence belongs to the germin family. In terms of assembly, oligomer (believed to be a pentamer but probably hexamer).

It is found in the secreted. The protein localises to the extracellular space. The protein resides in the apoplast. Functionally, may play a role in plant defense. Probably has no oxalate oxidase activity even if the active site is conserved. In Oryza sativa subsp. japonica (Rice), this protein is Germin-like protein 1-2.